The chain runs to 264 residues: Fructose-1,6-bisphosphatase/inositol-1-monophosphatase (264 aa).

Mg(2+) is bound by residues Glu70, Asp86, Leu88, and Asp89. Substrate-binding positions include 89-91, Arg185, and Ala190; that span reads DGT. A Mg(2+)-binding site is contributed by Asp214.

It belongs to the inositol monophosphatase superfamily. FBPase class 4 family. The cofactor is Mg(2+).

It carries out the reaction beta-D-fructose 1,6-bisphosphate + H2O = beta-D-fructose 6-phosphate + phosphate. It catalyses the reaction a myo-inositol phosphate + H2O = myo-inositol + phosphate. Phosphatase with broad specificity; it can dephosphorylate fructose 1,6-bisphosphate, and both D and L isomers of inositol-1-phosphate (I-1-P). This Aquifex aeolicus (strain VF5) protein is Fructose-1,6-bisphosphatase/inositol-1-monophosphatase (suhB).